Here is a 292-residue protein sequence, read N- to C-terminus: Homoserine kinase (292 aa).

Position 84–94 (84–94 (PLSRGLGSSSA)) interacts with ATP.

This sequence belongs to the GHMP kinase family. Homoserine kinase subfamily.

The protein localises to the cytoplasm. The enzyme catalyses L-homoserine + ATP = O-phospho-L-homoserine + ADP + H(+). It participates in amino-acid biosynthesis; L-threonine biosynthesis; L-threonine from L-aspartate: step 4/5. Catalyzes the ATP-dependent phosphorylation of L-homoserine to L-homoserine phosphate. This chain is Homoserine kinase, found in Campylobacter jejuni subsp. jejuni serotype O:6 (strain 81116 / NCTC 11828).